The sequence spans 915 residues: Metabotropic glutamate receptor 7 (915 aa).

A signal peptide spans 1–34 (MVQLGKLLRVLTLMKFPCCVLEVLLCVLAAAARG). The Extracellular segment spans residues 35-590 (QEMYAPHSIR…IIKLEWHSPW (556 aa)). Cys-67 and Cys-109 form a disulfide bridge. Asn-98 is a glycosylation site (N-linked (GlcNAc...) asparagine). Residues Ser-159, 180-182 (AST), Tyr-230, and Asp-314 each bind L-glutamate. 7 cysteine pairs are disulfide-bonded: Cys-249–Cys-541, Cys-374–Cys-390, Cys-430–Cys-437, Cys-523–Cys-542, Cys-527–Cys-545, Cys-548–Cys-560, and Cys-563–Cys-576. Lys-407 is an L-glutamate binding site. Residues Asn-458 and Asn-486 are each glycosylated (N-linked (GlcNAc...) asparagine). Asn-572 is a glycosylation site (N-linked (GlcNAc...) asparagine). Residues 591–615 (AVIPVFLAMLGIIATIFVMATFIRY) form a helical membrane-spanning segment. The Cytoplasmic segment spans residues 616–627 (NDTPIVRASGRE). The helical transmembrane segment at 628-648 (LSYVLLTGIFLCYIITFLMIA) threads the bilayer. Topologically, residues 649-654 (KPDVAV) are extracellular. A helical membrane pass occupies residues 655–675 (CSFRRVFLGLGMCISYAALLT). Over 676 to 702 (KTNRIYRIFEQGKKSVTAPRLISPTSQ) the chain is Cytoplasmic. The chain crosses the membrane as a helical span at residues 703–723 (LAITSSLISVQLLGVFIWFGV). Topologically, residues 724–753 (DPPNIIIDYDEHKTMNPEQARGVLKCDITD) are extracellular. A helical membrane pass occupies residues 754-775 (LQIICSLGYSILLMVTCTVYAI). The Cytoplasmic portion of the chain corresponds to 776 to 788 (KTRGVPENFNEAK). The chain crosses the membrane as a helical span at residues 789 to 810 (PIGFTMYTTCIVWLAFIPIFFG). At 811 to 825 (TAQSAEKLYIQTTTL) the chain is on the extracellular side. Residues 826 to 850 (TISMNLSASVALGMLYMPKVYIIIF) form a helical membrane-spanning segment. Residues 851 to 915 (HPELNVQKRK…KYVSYNNLVI (65 aa)) lie on the Cytoplasmic side of the membrane. Residues 874–895 (SRLSHKPSDRPNGEAKTELCEN) are disordered. Residues 879–892 (KPSDRPNGEAKTEL) show a composition bias toward basic and acidic residues. At Ser-900 the chain carries Phosphoserine.

Belongs to the G-protein coupled receptor 3 family. As to quaternary structure, homodimer. Interacts with PICK1.

Its subcellular location is the cell membrane. Its function is as follows. G-protein coupled receptor activated by glutamate that regulates axon outgrowth through the MAPK-cAMP-PKA signaling pathway during neuronal development. Ligand binding causes a conformation change that triggers signaling via guanine nucleotide-binding proteins (G proteins) and modulates the activity of downstream effectors, such as adenylate cyclase that it inhibits. The protein is Metabotropic glutamate receptor 7 (Grm7) of Mus musculus (Mouse).